Here is a 158-residue protein sequence, read N- to C-terminus: MYEFKDYYQNTVQLSFDDQPFSDSPKHVWVICRFGGKWLLTEHEDRGYEFPGGKVEPMECAEEAALREVKEETGARVKSLKYLGQYKVLGKEKVIVKNIYFADIEKLEKQADYFETKGPVLFHELPENLSRNKKFSFIMKDSVLPISLKKLKESGWIE.

The region spanning 6–145 (DYYQNTVQLS…SFIMKDSVLP (140 aa)) is the Nudix hydrolase domain. A Nudix box motif is present at residues 53-74 (GKVEPMECAEEAALREVKEETG). Mg(2+) contacts are provided by E68 and E72.

It belongs to the Nudix hydrolase family. It depends on Mg(2+) as a cofactor.

The catalysed reaction is 8-oxo-dGTP + H2O = 8-oxo-dGMP + diphosphate + H(+). Not induced by oxidative damage (following treatment with paraquat or hydrogen peroxide). Not induced by mitomycin C. Not induced by sigma-B general stress inducers such as sodium chloride, ethanol or heat. Functionally, involved in the GO system responsible for removing an oxidatively damaged form of guanine (7,8-dihydro-8-oxoguanine, 8-oxo-dGTP) from DNA and the nucleotide pool. 8-oxo-dGTP is inserted opposite dA and dC residues of template DNA with almost equal efficiency thus leading to A.T to G.C transversions. Functions, in conjunction with MutT, to protect vegetatively growing cells from DNA-damaging agents such as H(2)O(2) or t-BHP (t-butylhydroperoxide). The 2 proteins do not however protect spores. According to PubMed:15576788, phosphohydrolase that catalyzes the hydrolysis of all common nucleoside triphosphates as well as of the mutagenic analog 8-oxo-dGTP. The high catalytic efficiency on dGTP is in contrast to results from PubMed:14761999. According to PubMed:14761999, catalyzes the hydrolysis of 8-oxo-dGTP with a specific activity 413 times higher than that exhibited against dGTP. Preferentially catalyzes the hydrolysis of 8-oxo-dGTP and 8-oxo-GTP. According to PubMed:15576788, hydrolyzes nucleoside triphosphates in a stepwise fashion through the diphosphate to the monophosphate, releasing two molecules of inorganic orthophosphate. In Bacillus subtilis (strain 168), this protein is Putative 8-oxo-dGTP diphosphatase YtkD (ytkD).